A 273-amino-acid polypeptide reads, in one-letter code: HTH-type transcriptional regulator NimR (273 aa).

Residues 158-258 form the HTH araC/xylS-type domain; that stretch reads PKIRTMVEMM…GQTPGRYIAR (101 aa). 2 consecutive DNA-binding regions (H-T-H motif) follow at residues 178–199 and 225–248; these read GQWAGFFAMSERNLARLIVKET and VQKVAHTLGYDSTTAFITMFKKGL.

Functionally, negatively regulates expression of the nimT operon and its own expression. Acts by binding to the nimR-nimT intergenic region. The protein is HTH-type transcriptional regulator NimR of Escherichia coli (strain K12).